The following is a 203-amino-acid chain: N-(5'-phosphoribosyl)anthranilate isomerase (203 aa).

It belongs to the TrpF family.

The enzyme catalyses N-(5-phospho-beta-D-ribosyl)anthranilate = 1-(2-carboxyphenylamino)-1-deoxy-D-ribulose 5-phosphate. Its pathway is amino-acid biosynthesis; L-tryptophan biosynthesis; L-tryptophan from chorismate: step 3/5. This is N-(5'-phosphoribosyl)anthranilate isomerase from Listeria innocua serovar 6a (strain ATCC BAA-680 / CLIP 11262).